Consider the following 427-residue polypeptide: UDP-N-acetylglucosamine 1-carboxyvinyltransferase (427 aa).

A phosphoenolpyruvate-binding site is contributed by 22–23 (KN). Arginine 92 is a binding site for UDP-N-acetyl-alpha-D-glucosamine. Catalysis depends on aspartate 116, which acts as the Proton donor. 2 residues coordinate UDP-N-acetyl-alpha-D-glucosamine: aspartate 312 and methionine 334.

This sequence belongs to the EPSP synthase family. MurA subfamily.

The protein localises to the cytoplasm. The catalysed reaction is phosphoenolpyruvate + UDP-N-acetyl-alpha-D-glucosamine = UDP-N-acetyl-3-O-(1-carboxyvinyl)-alpha-D-glucosamine + phosphate. The protein operates within cell wall biogenesis; peptidoglycan biosynthesis. Functionally, cell wall formation. Adds enolpyruvyl to UDP-N-acetylglucosamine. The sequence is that of UDP-N-acetylglucosamine 1-carboxyvinyltransferase from Borreliella burgdorferi (strain ATCC 35210 / DSM 4680 / CIP 102532 / B31) (Borrelia burgdorferi).